Here is a 527-residue protein sequence, read N- to C-terminus: Arginine--tRNA ligase (527 aa).

A 'HIGH' region motif is present at residues 112–122 (ANPTGPLHIGH).

This sequence belongs to the class-I aminoacyl-tRNA synthetase family. Monomer.

The protein resides in the cytoplasm. It carries out the reaction tRNA(Arg) + L-arginine + ATP = L-arginyl-tRNA(Arg) + AMP + diphosphate. The sequence is that of Arginine--tRNA ligase from Nitratiruptor sp. (strain SB155-2).